A 182-amino-acid polypeptide reads, in one-letter code: Probable RNA 2'-phosphotransferase (182 aa).

Belongs to the KptA/TPT1 family.

Functionally, removes the 2'-phosphate from RNA via an intermediate in which the phosphate is ADP-ribosylated by NAD followed by a presumed transesterification to release the RNA and generate ADP-ribose 1''-2''-cyclic phosphate (APPR&gt;P). May function as an ADP-ribosylase. In Flavobacterium johnsoniae (strain ATCC 17061 / DSM 2064 / JCM 8514 / BCRC 14874 / CCUG 350202 / NBRC 14942 / NCIMB 11054 / UW101) (Cytophaga johnsonae), this protein is Probable RNA 2'-phosphotransferase.